Consider the following 551-residue polypeptide: Vacuolar protein sorting-associated protein 17 (551 aa).

The disordered stretch occupies residues 1–100 (MTSAVPYDPY…SERVILPERS (100 aa)). Polar residues-rich tracts occupy residues 29–39 (AATTTDGSSSM) and 46–64 (TEQTAASVQDNGTANNIQN). The 120-residue stretch at 108 to 227 (LLAKVTGLER…FFIESDFNTY (120 aa)) folds into the PX domain. Residues 359–385 (IMRNLVQAQQNSKAKQEQARRFRSRRD) adopt a coiled-coil conformation. The disordered stretch occupies residues 474–504 (RLGRHAVSNNNSDTSQTLKGDSWTGESNRKS). Positions 480–504 (VSNNNSDTSQTLKGDSWTGESNRKS) are enriched in polar residues. Ser544 carries the phosphoserine modification.

Belongs to the VPS17 family. In terms of assembly, component of the retromer complex which consists of VPS29, VPS26, VPS35, VPS5 and VPS17. Component of a retromer subcomplex consisting of VPS5 and VPS17. Phosphorylated on one or more serine residues.

Its subcellular location is the endomembrane system. Functionally, component of the membrane-associated retromer complex which is essential in endosome-to-Golgi retrograde transport. The VPS5-VPS17 subcomplex may assemble onto the membrane to promote vesicle formation and is required for recycling the vacuolar protein-sorting receptor. Required for the sorting and delivery of a subset of soluble vacuolar hydrolases. Required for retention of late Golgi membrane proteins and vacuolar biogenesis. Involved in vacuolar fragmentation during hyperosmotic stress. The sequence is that of Vacuolar protein sorting-associated protein 17 from Saccharomyces cerevisiae (strain ATCC 204508 / S288c) (Baker's yeast).